A 236-amino-acid polypeptide reads, in one-letter code: Small ribosomal subunit protein uS2c (236 aa).

The protein belongs to the universal ribosomal protein uS2 family.

The protein localises to the plastid. It localises to the chloroplast. This Piper cenocladum (Ant piper) protein is Small ribosomal subunit protein uS2c (rps2).